The chain runs to 382 residues: Flap endonuclease 1 (382 aa).

The N-domain stretch occupies residues 1-105 (MGIKGLNAII…HELTKRSSRR (105 aa)). A Mg(2+)-binding site is contributed by D34. Residues R47 and R71 each coordinate DNA. Mg(2+) is bound by residues D87, E156, E158, D177, and D179. Residues 120–251 (EKMKQERRLV…VTALKLIKTH (132 aa)) are I-domain. DNA is bound at residue E156. DNA-binding residues include G229 and D231. D231 is a Mg(2+) binding site. An interaction with PCNA region spans residues 339–347 (IQGRLDGFF). The segment at 358–382 (AAAAKRAQENKKLNKNKNKVTKGRR) is disordered. Over residues 370–382 (LNKNKNKVTKGRR) the composition is skewed to basic residues.

Belongs to the XPG/RAD2 endonuclease family. FEN1 subfamily. In terms of assembly, interacts with PCNA. Three molecules of RAD27 bind to one PCNA trimer with each molecule binding to one PCNA monomer. PCNA stimulates the nuclease activity without altering cleavage specificity. The cofactor is Mg(2+). In terms of processing, phosphorylated. Phosphorylation upon DNA damage induces relocalization to the nuclear plasma.

The protein localises to the nucleus. It is found in the nucleolus. The protein resides in the nucleoplasm. It localises to the mitochondrion. Functionally, structure-specific nuclease with 5'-flap endonuclease and 5'-3' exonuclease activities involved in DNA replication and repair. During DNA replication, cleaves the 5'-overhanging flap structure that is generated by displacement synthesis when DNA polymerase encounters the 5'-end of a downstream Okazaki fragment. It enters the flap from the 5'-end and then tracks to cleave the flap base, leaving a nick for ligation. Also involved in the long patch base excision repair (LP-BER) pathway, by cleaving within the apurinic/apyrimidinic (AP) site-terminated flap. Acts as a genome stabilization factor that prevents flaps from equilibrating into structures that lead to duplications and deletions. Also possesses 5'-3' exonuclease activity on nicked or gapped double-stranded DNA, and exhibits RNase H activity. Also involved in replication and repair of rDNA and in repairing mitochondrial DNA. The sequence is that of Flap endonuclease 1 from Saccharomyces cerevisiae (strain RM11-1a) (Baker's yeast).